Reading from the N-terminus, the 318-residue chain is Rhomboid-related protein 4 (318 aa).

The Cytoplasmic segment spans residues 1–21 (MQRRSRGINTGLILLLSQIFH). Residues 22 to 42 (VGINNIPPVTLATLALNIWFF) traverse the membrane as a helical segment. Topologically, residues 43–106 (LNPQKPLYSS…RRLGSRWFAY (64 aa)) are extracellular. Residues 107–127 (VITTFSVLTGVVYLLLQFAVA) form a helical membrane-spanning segment. The Cytoplasmic portion of the chain corresponds to 128–137 (EFMDEPDFKR). A helical transmembrane segment spans residues 138 to 154 (SCAVGFSGVLFALKVLN). The active-site Nucleophile is the serine 144. Over 155-179 (NHYCPGGFVNILGFPVPNRFACWVE) the chain is Extracellular. The helical transmembrane segment at 180 to 204 (LVAIHLFSPGTSFAGHQAGILVGLM) threads the bilayer. Histidine 195 is an active-site residue. Residues 205–318 (YTQGPLKKIM…RQRLHRFDSQ (114 aa)) lie on the Cytoplasmic side of the membrane. Residues 271–286 (SEEEQLERALQASLWD) are ubiquitin-binding domain (UBD). Residues 285 to 318 (WDRGHTRNSPPPYGFHLSPEEEMRRQRLHRFDSQ) form a disordered region. A compositionally biased stretch (basic and acidic residues) spans 302-318 (SPEEEMRRQRLHRFDSQ). A VCP/p97-interacting motif (VIM) region spans residues 303 to 318 (PEEEMRRQRLHRFDSQ).

The protein belongs to the peptidase S54 family. Interacts with BIK and STEAP3. Interacts (via C-terminal domain) with VCP. Interacts with ubiquitin and ubiquitinated proteins.

The protein localises to the endoplasmic reticulum membrane. Its subcellular location is the mitochondrion membrane. It carries out the reaction Cleaves type-1 transmembrane domains using a catalytic dyad composed of serine and histidine that are contributed by different transmembrane domains.. Inhibited by aprotinin. In terms of biological role, intramembrane-cleaving serine protease that cleaves single transmembrane or multi-pass membrane proteins in the hydrophobic plane of the membrane, luminal loops and juxtamembrane regions. Involved in regulated intramembrane proteolysis and the subsequent release of functional polypeptides from their membrane anchors. Functional component of endoplasmic reticulum-associated degradation (ERAD) for misfolded membrane proteins. Required for the degradation process of some specific misfolded endoplasmic reticulum (ER) luminal proteins. Participates in the transfer of misfolded proteins from the ER to the cytosol, where they are destroyed by the proteasome in a ubiquitin-dependent manner. Functions in BIK, MPZ, PKD1, PTCRA, RHO, STEAP3 and TRAC processing. Involved in the regulation of exosomal secretion; inhibits the TSAP6-mediated secretion pathway. Involved in the regulation of apoptosis; modulates BIK-mediated apoptotic activity. Also plays a role in the regulation of spermatogenesis; inhibits apoptotic activity in spermatogonia. The protein is Rhomboid-related protein 4 (RHBDD1) of Pongo abelii (Sumatran orangutan).